A 287-amino-acid polypeptide reads, in one-letter code: Intermediate filament family orphan 2 (287 aa).

The IF rod domain maps to 1–254 (MNLQTMVDTL…RLIKGSADRN (254 aa)). The interval 248–287 (KGSADRNSPSPSSVASSDSGSTDEIQDDLEREADVEPMVS) is disordered. Residues 255–267 (SPSPSSVASSDSG) show a composition bias toward low complexity. The span at 271–287 (EIQDDLEREADVEPMVS) shows a compositional bias: acidic residues.

Belongs to the intermediate filament family.

In Rattus norvegicus (Rat), this protein is Intermediate filament family orphan 2 (Iffo2).